We begin with the raw amino-acid sequence, 337 residues long: Nicotinate-nucleotide--dimethylbenzimidazole phosphoribosyltransferase (337 aa).

Glu-305 (proton acceptor) is an active-site residue.

It belongs to the CobT family.

It catalyses the reaction 5,6-dimethylbenzimidazole + nicotinate beta-D-ribonucleotide = alpha-ribazole 5'-phosphate + nicotinate + H(+). Its pathway is nucleoside biosynthesis; alpha-ribazole biosynthesis; alpha-ribazole from 5,6-dimethylbenzimidazole: step 1/2. Its function is as follows. Catalyzes the synthesis of alpha-ribazole-5'-phosphate from nicotinate mononucleotide (NAMN) and 5,6-dimethylbenzimidazole (DMB). The chain is Nicotinate-nucleotide--dimethylbenzimidazole phosphoribosyltransferase from Roseobacter denitrificans (strain ATCC 33942 / OCh 114) (Erythrobacter sp. (strain OCh 114)).